We begin with the raw amino-acid sequence, 130 residues long: MKVGVGIHIIADFYGVDSKLISTTERMYPIIEGAVKYGRLTKISSDYYQFRPQGASGVVLLAESHLSFHTWPEYGLVTLDIYTCGDPKTADDAFEYLTRELKPTSVTTRKIVRGDLVGEEGLNEMQVEIH.

The Schiff-base intermediate with substrate; via pyruvic acid role is filled by Ser-64. The residue at position 64 (Ser-64) is a Pyruvic acid (Ser); by autocatalysis. His-69 functions as the Proton acceptor; for processing activity in the catalytic mechanism. Cys-84 acts as the Proton donor; for catalytic activity in catalysis.

Belongs to the prokaryotic AdoMetDC family. Type 1 subfamily. Heterotetramer of two alpha and two beta chains arranged as a dimer of alpha/beta heterodimers. Pyruvate serves as cofactor. Is synthesized initially as an inactive proenzyme. Formation of the active enzyme involves a self-maturation process in which the active site pyruvoyl group is generated from an internal serine residue via an autocatalytic post-translational modification. Two non-identical subunits are generated from the proenzyme in this reaction, and the pyruvate is formed at the N-terminus of the alpha chain, which is derived from the carboxyl end of the proenzyme. The post-translation cleavage follows an unusual pathway, termed non-hydrolytic serinolysis, in which the side chain hydroxyl group of the serine supplies its oxygen atom to form the C-terminus of the beta chain, while the remainder of the serine residue undergoes an oxidative deamination to produce ammonia and the pyruvoyl group blocking the N-terminus of the alpha chain.

It catalyses the reaction S-adenosyl-L-methionine + H(+) = S-adenosyl 3-(methylsulfanyl)propylamine + CO2. Its pathway is amine and polyamine biosynthesis; S-adenosylmethioninamine biosynthesis; S-adenosylmethioninamine from S-adenosyl-L-methionine: step 1/1. In terms of biological role, catalyzes the decarboxylation of S-adenosylmethionine to S-adenosylmethioninamine (dcAdoMet), the propylamine donor required for the synthesis of the polyamines spermine and spermidine from the diamine putrescine. This is S-adenosylmethionine decarboxylase proenzyme from Thermoplasma volcanium (strain ATCC 51530 / DSM 4299 / JCM 9571 / NBRC 15438 / GSS1).